Reading from the N-terminus, the 892-residue chain is Alanine--tRNA ligase (892 aa).

H580, H584, C682, and H686 together coordinate Zn(2+).

It belongs to the class-II aminoacyl-tRNA synthetase family. Requires Zn(2+) as cofactor.

Its subcellular location is the cytoplasm. It carries out the reaction tRNA(Ala) + L-alanine + ATP = L-alanyl-tRNA(Ala) + AMP + diphosphate. Catalyzes the attachment of alanine to tRNA(Ala) in a two-step reaction: alanine is first activated by ATP to form Ala-AMP and then transferred to the acceptor end of tRNA(Ala). Also edits incorrectly charged Ser-tRNA(Ala) and Gly-tRNA(Ala) via its editing domain. This Salinispora tropica (strain ATCC BAA-916 / DSM 44818 / JCM 13857 / NBRC 105044 / CNB-440) protein is Alanine--tRNA ligase.